The sequence spans 542 residues: Isocitrate lyase (542 aa).

Residue 102–104 (SGW) participates in substrate binding. Residue aspartate 170 coordinates Mg(2+). Cysteine 208 functions as the Proton acceptor in the catalytic mechanism. Substrate-binding positions include 209-210 (GH), arginine 245, 428-432 (NLSPS), and threonine 462.

It belongs to the isocitrate lyase/PEP mutase superfamily. Isocitrate lyase family. Homotetramer. The cofactor is Mg(2+).

The protein localises to the glyoxysome. It carries out the reaction D-threo-isocitrate = glyoxylate + succinate. The enzyme catalyses (2S,3R)-3-hydroxybutane-1,2,3-tricarboxylate = pyruvate + succinate. Its pathway is carbohydrate metabolism; glyoxylate cycle; (S)-malate from isocitrate: step 1/2. Catalyzes the formation of succinate and glyoxylate from isocitrate, a key step of the glyoxylate cycle, which operates as an anaplerotic route for replenishing the tricarboxylic acid cycle. Required for growth on ethanol or acetate, but dispensable when fermentable carbon sources are available. Also acts on 2-methylisocitrate. The polypeptide is Isocitrate lyase (Kluyveromyces lactis (strain ATCC 8585 / CBS 2359 / DSM 70799 / NBRC 1267 / NRRL Y-1140 / WM37) (Yeast)).